We begin with the raw amino-acid sequence, 276 residues long: Cholesterol 25-hydroxylase-like protein 1, member 2 (276 aa).

N-linked (GlcNAc...) asparagine glycosylation occurs at N30. The next 3 helical transmembrane spans lie at 39–59 (LFPV…YLSC), 90–110 (GVTL…QWMW), and 126–146 (LVGG…IWHF). Positions 134-265 (LLLFDLQYFI…FSHWDKMFGT (132 aa)) constitute a Fatty acid hydroxylase domain. A Histidine box-1 motif is present at residues 144–148 (WHFLH). Residues 159–163 (HAIHH) carry the Histidine box-2 motif. N-linked (GlcNAc...) asparagine glycosylation occurs at N164. The next 2 helical transmembrane spans lie at 175–195 (CLGG…PVLL) and 199–219 (LLTT…DHCG). The short motif at 240-246 (KHDVHHQ) is the Histidine box-3 element.

Belongs to the sterol desaturase family. Requires Fe cation as cofactor.

The protein localises to the endoplasmic reticulum membrane. Its function is as follows. May catalyze the formation of 25-hydroxycholesterol from cholesterol. In Danio rerio (Zebrafish), this protein is Cholesterol 25-hydroxylase-like protein 1, member 2.